The chain runs to 374 residues: Protein RecA (374 aa).

77 to 84 (GPESSGKT) provides a ligand contact to ATP. The tract at residues 355–374 (AAKTAAADKSAPAKASEAAA) is disordered.

The protein belongs to the RecA family.

It localises to the cytoplasm. In terms of biological role, can catalyze the hydrolysis of ATP in the presence of single-stranded DNA, the ATP-dependent uptake of single-stranded DNA by duplex DNA, and the ATP-dependent hybridization of homologous single-stranded DNAs. It interacts with LexA causing its activation and leading to its autocatalytic cleavage. This is Protein RecA from Synechococcus sp. (strain CC9605).